Reading from the N-terminus, the 83-residue chain is Cytochrome b559 subunit alpha (83 aa).

Residues 21–35 (VIHSITIPSLFIAGW) traverse the membrane as a helical segment. Residue His23 coordinates heme.

The protein belongs to the PsbE/PsbF family. Heterodimer of an alpha subunit and a beta subunit. PSII is composed of 1 copy each of membrane proteins PsbA, PsbB, PsbC, PsbD, PsbE, PsbF, PsbH, PsbI, PsbJ, PsbK, PsbL, PsbM, PsbT, PsbX, PsbY, PsbZ, Psb30/Ycf12, at least 3 peripheral proteins of the oxygen-evolving complex and a large number of cofactors. It forms dimeric complexes. Heme b is required as a cofactor.

It localises to the plastid. Its subcellular location is the chloroplast thylakoid membrane. Functionally, this b-type cytochrome is tightly associated with the reaction center of photosystem II (PSII). PSII is a light-driven water:plastoquinone oxidoreductase that uses light energy to abstract electrons from H(2)O, generating O(2) and a proton gradient subsequently used for ATP formation. It consists of a core antenna complex that captures photons, and an electron transfer chain that converts photonic excitation into a charge separation. This Ginkgo biloba (Ginkgo) protein is Cytochrome b559 subunit alpha.